The chain runs to 236 residues: MPINCKVKSIEPLACNTFRILLHPEQPVAFKAGQYLTVVMGEKDKRPFSIASSPCRHEGEIELHIGAAEHNAYAGEVVESMKSALETGGDILIDAPHGEAWIREDSDRSMLLIAGGTGFSYVRSILDHCISQQIQKPIYLYWGGRDECQLYAKAELESIAQAHSHITFVPVVEKSEGWTGKTGNVLEAVKADFNSLADMDIYIAGRFEMAGAAREQFTTEKQAKKEQLFGDAFAFI.

The FAD-binding FR-type domain maps to 1–103; sequence MPINCKVKSI…DAPHGEAWIR (103 aa). Position 115–119 (115–119) interacts with pyridine; the sequence is GGTGF.

Belongs to the Fre/LuxG FAD/NAD(P) flavoprotein oxidoreductase family.

In terms of biological role, involved in bioluminescence. It is a good supplier of reduced flavin mononucleotide (FMNH2) to the bioluminescence reaction. Preferably uses riboflavin as an electron acceptor when NADPH is used as an electron donor. This chain is NAD(P)H-flavin reductase (fre), found in Aliivibrio fischeri (Vibrio fischeri).